Consider the following 285-residue polypeptide: 2-dehydro-3-deoxyphosphooctonate aldolase (285 aa).

The protein belongs to the KdsA family.

It is found in the cytoplasm. The enzyme catalyses D-arabinose 5-phosphate + phosphoenolpyruvate + H2O = 3-deoxy-alpha-D-manno-2-octulosonate-8-phosphate + phosphate. The protein operates within carbohydrate biosynthesis; 3-deoxy-D-manno-octulosonate biosynthesis; 3-deoxy-D-manno-octulosonate from D-ribulose 5-phosphate: step 2/3. It participates in bacterial outer membrane biogenesis; lipopolysaccharide biosynthesis. The protein is 2-dehydro-3-deoxyphosphooctonate aldolase of Paracidovorax citrulli (strain AAC00-1) (Acidovorax citrulli).